The primary structure comprises 470 residues: Cysteine--tRNA ligase (470 aa).

Cys-28 is a Zn(2+) binding site. The short motif at 30-40 (PTVYNYIHIGN) is the 'HIGH' region element. Residues Cys-212, His-237, and Glu-241 each coordinate Zn(2+). A 'KMSKS' region motif is present at residues 271-275 (KMSKS). Lys-274 contacts ATP.

Belongs to the class-I aminoacyl-tRNA synthetase family. Monomer. Requires Zn(2+) as cofactor.

Its subcellular location is the cytoplasm. It catalyses the reaction tRNA(Cys) + L-cysteine + ATP = L-cysteinyl-tRNA(Cys) + AMP + diphosphate. The protein is Cysteine--tRNA ligase of Lactiplantibacillus plantarum (strain ATCC BAA-793 / NCIMB 8826 / WCFS1) (Lactobacillus plantarum).